Reading from the N-terminus, the 115-residue chain is MRTYENIMIVHPDKVADEYNAVVEKFKGVLTDLNANLLKVDEWGVRKLAYPVKKQGRGSYVLTVFEADPTIIDEYERRLRLDEAVIKFQTVLLEKGFVEEAAAAAEEGANAEEEE.

Belongs to the bacterial ribosomal protein bS6 family.

Binds together with bS18 to 16S ribosomal RNA. The chain is Small ribosomal subunit protein bS6 from Syntrophotalea carbinolica (strain DSM 2380 / NBRC 103641 / GraBd1) (Pelobacter carbinolicus).